Reading from the N-terminus, the 191-residue chain is Glutathione-dependent formaldehyde-activating enzyme (191 aa).

A CENP-V/GFA domain is found at 22–169 (FAGGTLQCLC…LTELGLTPYD (148 aa)). Zn(2+) contacts are provided by Cys29, Cys31, Cys50, Cys52, Cys55, Cys97, and Cys100.

The protein belongs to the Gfa family. Requires Zn(2+) as cofactor.

The catalysed reaction is S-(hydroxymethyl)glutathione = glutathione + formaldehyde. It functions in the pathway one-carbon metabolism; formaldehyde degradation; formate from formaldehyde (glutathione route): step 1/3. Its function is as follows. Catalyzes the condensation of formaldehyde and glutathione to S-hydroxymethylglutathione. The protein is Glutathione-dependent formaldehyde-activating enzyme of Xanthomonas campestris pv. campestris (strain B100).